The primary structure comprises 313 residues: Porphobilinogen deaminase (313 aa).

C242 carries the post-translational modification S-(dipyrrolylmethanemethyl)cysteine.

This sequence belongs to the HMBS family. In terms of assembly, monomer. Dipyrromethane is required as a cofactor.

It catalyses the reaction 4 porphobilinogen + H2O = hydroxymethylbilane + 4 NH4(+). Its pathway is porphyrin-containing compound metabolism; protoporphyrin-IX biosynthesis; coproporphyrinogen-III from 5-aminolevulinate: step 2/4. Its function is as follows. Tetrapolymerization of the monopyrrole PBG into the hydroxymethylbilane pre-uroporphyrinogen in several discrete steps. The protein is Porphobilinogen deaminase of Yersinia pseudotuberculosis serotype IB (strain PB1/+).